Consider the following 125-residue polypeptide: Large ribosomal subunit protein bL12 (125 aa).

Belongs to the bacterial ribosomal protein bL12 family. As to quaternary structure, homodimer. Part of the ribosomal stalk of the 50S ribosomal subunit. Forms a multimeric L10(L12)X complex, where L10 forms an elongated spine to which 2 to 4 L12 dimers bind in a sequential fashion. Binds GTP-bound translation factors.

Forms part of the ribosomal stalk which helps the ribosome interact with GTP-bound translation factors. Is thus essential for accurate translation. This chain is Large ribosomal subunit protein bL12, found in Rhizobium leguminosarum bv. trifolii (strain WSM2304).